The sequence spans 461 residues: Steroidogenic factor 1 (461 aa).

Positions 10–85 form a DNA-binding region, nuclear receptor; sequence DELCPVCGDK…VGMRLEAVRA (76 aa). The segment at 13 to 33 adopts an NR C4-type zinc-finger fold; sequence CPVCGDKVSGYHYGLLTCESC. Residues Lys34, Lys38, and Lys72 each carry the N6-acetyllysine modification. An NR C4-type zinc finger spans residues 49–73; the sequence is CTESQSCKIDKTQRKRCPFCRFQKC. Lys119 is covalently cross-linked (Glycyl lysine isopeptide (Lys-Gly) (interchain with G-Cter in SUMO)). The tract at residues 119–150 is disordered; that stretch reads KLETGPPMGVAPPPPPPPDYMLPPGLHAPEPK. Residues 127–139 are compositionally biased toward pro residues; that stretch reads GVAPPPPPPPDYM. A Glycyl lysine isopeptide (Lys-Gly) (interchain with G-Cter in SUMO) cross-link involves residue Lys194. A Phosphoserine; by CDK7 modification is found at Ser203. The NR LBD domain maps to 222–459; sequence GVPELIVQLL…NLLIEMLQAK (238 aa). Residues 230–461 form an important for dimerization region; that stretch reads LLQLEPDEDQ…LIEMLQAKQT (232 aa). A 1,2-diacyl-sn-glycero-3-phosphocholine is bound by residues Gly341, Tyr436, and Lys440.

The protein belongs to the nuclear hormone receptor family. NR5 subfamily. Binds DNA as a monomer. Part of a complex consisting of SFPQ, NONO and NR5A1. Interacts with NR0B2, NCOA2 and PPARGC1A. Interacts with DGKQ and CDK7. Binds to and activated by HIPK3. Post-translationally, acetylation stimulates the transcriptional activity. In terms of processing, sumoylation reduces CDK7-mediated phosphorylation on Ser-203. Phosphorylated on Ser-203 by CDK7. This phosphorylation promotes transcriptional activity.

Its subcellular location is the nucleus. Its function is as follows. Transcriptional activator. Seems to be essential for sexual differentiation and formation of the primary steroidogenic tissues. Binds to the Ad4 site found in the promoter region of steroidogenic P450 genes such as CYP11A, CYP11B and CYP21B. Also regulates the AMH/Muellerian inhibiting substance gene as well as the AHCH and STAR genes. 5'-YCAAGGYC-3' and 5'-RRAGGTCA-3' are the consensus sequences for the recognition by NR5A1. The SFPQ-NONO-NR5A1 complex binds to the CYP17 promoter and regulates basal and cAMP-dependent transcriptional activity. Binds phosphatidylcholine and phospholipids with a phosphatidylinositol (PI) headgroup, in particular PI(3,4)P2 and PI(3,4,5)P3. Activated by the phosphorylation of NR5A1 by HIPK3 leading to increased steroidogenic gene expression upon cAMP signaling pathway stimulation. This Sus scrofa (Pig) protein is Steroidogenic factor 1 (NR5A1).